Consider the following 791-residue polypeptide: Phenylalanine--tRNA ligase beta subunit (791 aa).

Residues 39-147 (GDALGQVVVA…DDAPVGQALA (109 aa)) form the tRNA-binding domain. One can recognise a B5 domain in the interval 400-475 (PQPASILLRR…RIHGYDRVPT (76 aa)). Positions 453, 459, 462, and 463 each coordinate Mg(2+). The FDX-ACB domain maps to 697 to 790 (SRYPSMRRDL…IEREHRARIR (94 aa)).

The protein belongs to the phenylalanyl-tRNA synthetase beta subunit family. Type 1 subfamily. Tetramer of two alpha and two beta subunits. The cofactor is Mg(2+).

It localises to the cytoplasm. It catalyses the reaction tRNA(Phe) + L-phenylalanine + ATP = L-phenylalanyl-tRNA(Phe) + AMP + diphosphate + H(+). The sequence is that of Phenylalanine--tRNA ligase beta subunit from Xanthomonas campestris pv. campestris (strain 8004).